Here is a 77-residue protein sequence, read N- to C-terminus: Putative defensin-like protein 60 (77 aa).

A signal peptide spans 1–25 (MKMNITKSYVILFLVVVMTNSLSNS). 4 cysteine pairs are disulfide-bonded: Cys-41–Cys-75, Cys-45–Cys-68, Cys-54–Cys-73, and Cys-58–Cys-74.

The protein belongs to the DEFL family.

It localises to the secreted. This Arabidopsis thaliana (Mouse-ear cress) protein is Putative defensin-like protein 60.